The primary structure comprises 166 residues: Interleukin-2 (166 aa).

The first 20 residues, 1-20 (MYSMQLASCVTLTLVLLVNS), serve as a signal peptide directing secretion. An O-linked (GalNAc...) threonine glycan is attached at Thr-23. Cys-89 and Cys-137 are disulfide-bonded.

This sequence belongs to the IL-2 family.

The protein localises to the secreted. Its function is as follows. Cytokine produced by activated CD4-positive helper T-cells and to a lesser extend activated CD8-positive T-cells and natural killer (NK) cells that plays pivotal roles in the immune response and tolerance. Binds to a receptor complex composed of either the high-affinity trimeric IL-2R (IL2RA/CD25, IL2RB/CD122 and IL2RG/CD132) or the low-affinity dimeric IL-2R (IL2RB and IL2RG). Interaction with the receptor leads to oligomerization and conformation changes in the IL-2R subunits resulting in downstream signaling starting with phosphorylation of JAK1 and JAK3. In turn, JAK1 and JAK3 phosphorylate the receptor to form a docking site leading to the phosphorylation of several substrates including STAT5. This process leads to activation of several pathways including STAT, phosphoinositide-3-kinase/PI3K and mitogen-activated protein kinase/MAPK pathways. Functions as a T-cell growth factor and can increase NK-cell cytolytic activity as well. Promotes strong proliferation of activated B-cells and subsequently immunoglobulin production. Plays a pivotal role in regulating the adaptive immune system by controlling the survival and proliferation of regulatory T-cells, which are required for the maintenance of immune tolerance. Moreover, participates in the differentiation and homeostasis of effector T-cell subsets, including Th1, Th2, Th17 as well as memory CD8-positive T-cells. This is Interleukin-2 (Il2) from Mus spretus (Western Mediterranean mouse).